A 393-amino-acid polypeptide reads, in one-letter code: Glutamate 5-kinase 1 (393 aa).

Residue Lys-17 participates in ATP binding. 3 residues coordinate substrate: Ser-57, Asp-144, and Asn-156. 176–177 (SD) serves as a coordination point for ATP. Positions 282–359 (AGSLSIDAGA…AEIAAILGYA (78 aa)) constitute a PUA domain.

It belongs to the glutamate 5-kinase family.

The protein resides in the cytoplasm. It catalyses the reaction L-glutamate + ATP = L-glutamyl 5-phosphate + ADP. Its pathway is amino-acid biosynthesis; L-proline biosynthesis; L-glutamate 5-semialdehyde from L-glutamate: step 1/2. Its function is as follows. Catalyzes the transfer of a phosphate group to glutamate to form L-glutamate 5-phosphate. In Rhizobium meliloti (strain 1021) (Ensifer meliloti), this protein is Glutamate 5-kinase 1.